Here is a 373-residue protein sequence, read N- to C-terminus: uncharacterized protein (373 aa).

This is an uncharacterized protein from Saccharomyces cerevisiae (strain ATCC 204508 / S288c) (Baker's yeast).